The following is a 532-amino-acid chain: MSLDELPHKVSDERVNHDTVTSHESEIGSGSISTVSSTVSSVESEKAAYEFLAQTPIKSTDAHLVEFSEAMRTVAKALRRVAEGKAAAQAEAEEWRRKYELEMAHKQQRKIKGYGSCANNELEKLASQLTLETPASDQAGCCGNHGICSHEVLQDESPGPNPRSSHKLVSRKASFRLSWGCNGDKNGQHKHDFVSFEKGDITTAERSNKQILLKWESSPQTVLFITKPNSNSVHVLCAEMVRWLKEHKKINVVVEPRVSKELLTEDSYYNFIQTWDDDEEKKMLHTKVDLIVTLGGDGTVLWAASLFKGPVPPVVAFSLGSLGFMTPFPSEQYRDCLDNVLNGPFSITLRNRLQCHVIRDAAKDELETEEPILVLNEVTIDRGISSYLTYLECYCDSSFVTCVQGDGLIISTTSGSTAYSLAAGGSMVHPQVPGILFTPICPHSLSFRPLILPEYVTLRVQVPHNSRGQAWASFDGKDRKLLSPGDALICSISPWPVPTACLVDSTTDFLRSIHEGLHWNLRKSQSFDGPRD.

The span at M1–E26 shows a compositional bias: basic and acidic residues. Residues M1 to I32 are disordered.

This sequence belongs to the NAD kinase family.

The catalysed reaction is NAD(+) + ATP = ADP + NADP(+) + H(+). In Oryza sativa subsp. japonica (Rice), this protein is Probable NAD kinase 1.